Reading from the N-terminus, the 149-residue chain is Large ribosomal subunit protein uL15 (149 aa).

The disordered stretch occupies residues 14–63; the sequence is ASRKRVGRGSGSGLGCTSGKGNKGQNARAGGGVRPGFEGGQMPLQRRLPK. Gly residues-rich tracts occupy residues 21–35 and 42–52; these read RGSG…GKGN and AGGGVRPGFEG.

Belongs to the universal ribosomal protein uL15 family. In terms of assembly, part of the 50S ribosomal subunit.

In terms of biological role, binds to the 23S rRNA. The polypeptide is Large ribosomal subunit protein uL15 (Nitratidesulfovibrio vulgaris (strain DSM 19637 / Miyazaki F) (Desulfovibrio vulgaris)).